The following is a 161-amino-acid chain: Nucleotide-binding protein AZOSEA28950 (161 aa).

The protein belongs to the YajQ family.

Functionally, nucleotide-binding protein. This chain is Nucleotide-binding protein AZOSEA28950, found in Aromatoleum aromaticum (strain DSM 19018 / LMG 30748 / EbN1) (Azoarcus sp. (strain EbN1)).